Here is a 21-residue protein sequence, read N- to C-terminus: Dahlein-5.5 (21 aa).

As to expression, expressed by the skin dorsal glands.

It is found in the secreted. Its function is as follows. Has no antimicrobial activity. Strongly inhibits the formation of NO by neuronal nitric oxide synthase at micromolar concentrations. This Ranoidea dahlii (Dahl's aquatic frog) protein is Dahlein-5.5.